The sequence spans 139 residues: Holo-[acyl-carrier-protein] synthase (139 aa).

Residues aspartate 8 and glutamate 57 each contribute to the Mg(2+) site.

Belongs to the P-Pant transferase superfamily. AcpS family. Requires Mg(2+) as cofactor.

It localises to the cytoplasm. It catalyses the reaction apo-[ACP] + CoA = holo-[ACP] + adenosine 3',5'-bisphosphate + H(+). Functionally, transfers the 4'-phosphopantetheine moiety from coenzyme A to a Ser of acyl-carrier-protein. This is Holo-[acyl-carrier-protein] synthase from Rhizobium meliloti (strain 1021) (Ensifer meliloti).